A 197-amino-acid chain; its full sequence is Ribonuclease HII (197 aa).

Positions 9 to 197 (KLIAGVDEVG…APVKKALEQF (189 aa)) constitute an RNase H type-2 domain. 3 residues coordinate a divalent metal cation: Asp15, Glu16, and Asp107.

The protein belongs to the RNase HII family. Mn(2+) is required as a cofactor. The cofactor is Mg(2+).

It is found in the cytoplasm. The catalysed reaction is Endonucleolytic cleavage to 5'-phosphomonoester.. Endonuclease that specifically degrades the RNA of RNA-DNA hybrids. This chain is Ribonuclease HII (rnhB), found in Haemophilus influenzae (strain ATCC 51907 / DSM 11121 / KW20 / Rd).